The sequence spans 402 residues: 1-deoxy-D-xylulose 5-phosphate reductoisomerase (402 aa).

NADPH is bound by residues threonine 13, glycine 14, serine 15, isoleucine 16, and asparagine 126. Lysine 127 serves as a coordination point for 1-deoxy-D-xylulose 5-phosphate. Glutamate 128 contacts NADPH. Aspartate 152 serves as a coordination point for Mn(2+). Residues serine 153, glutamate 154, serine 188, and histidine 211 each coordinate 1-deoxy-D-xylulose 5-phosphate. Glutamate 154 contacts Mn(2+). Glycine 217 lines the NADPH pocket. 4 residues coordinate 1-deoxy-D-xylulose 5-phosphate: serine 224, asparagine 229, lysine 230, and glutamate 233. Glutamate 233 is a binding site for Mn(2+).

This sequence belongs to the DXR family. Requires Mg(2+) as cofactor. The cofactor is Mn(2+).

It catalyses the reaction 2-C-methyl-D-erythritol 4-phosphate + NADP(+) = 1-deoxy-D-xylulose 5-phosphate + NADPH + H(+). The protein operates within isoprenoid biosynthesis; isopentenyl diphosphate biosynthesis via DXP pathway; isopentenyl diphosphate from 1-deoxy-D-xylulose 5-phosphate: step 1/6. Its function is as follows. Catalyzes the NADPH-dependent rearrangement and reduction of 1-deoxy-D-xylulose-5-phosphate (DXP) to 2-C-methyl-D-erythritol 4-phosphate (MEP). This Psychrobacter arcticus (strain DSM 17307 / VKM B-2377 / 273-4) protein is 1-deoxy-D-xylulose 5-phosphate reductoisomerase.